Here is a 315-residue protein sequence, read N- to C-terminus: Putative 2-hydroxyacid dehydrogenase HI_1556 (315 aa).

Residues Thr-73, 156–157 (CL), 231–233 (TGR), and Asp-257 each bind NAD(+). Arg-233 is a catalytic residue. The active site involves Glu-262. His-285 serves as the catalytic Proton donor. Residue 285-288 (HIAW) participates in NAD(+) binding.

This sequence belongs to the D-isomer specific 2-hydroxyacid dehydrogenase family.

The chain is Putative 2-hydroxyacid dehydrogenase HI_1556 from Haemophilus influenzae (strain ATCC 51907 / DSM 11121 / KW20 / Rd).